A 103-amino-acid chain; its full sequence is Protein IQ-DOMAIN 20 (103 aa).

The segment at 10–22 is calmodulin-binding; it reads VVRRKLLRRSQSR. IQ domains follow at residues 36–62 and 63–87; these read EEIAAVKIQAFFRGHLARRAFKALKSL and VKLQAVARGVLVRRQARIALHCMHA.

It belongs to the IQD family. As to quaternary structure, interacts with calmodulin (CaM and CML) at the plasma membrane in a calcium ion Ca(2+)- independent manner, however, Ca(2+) seems to modulate calmodulin binding. Binds to multiple calmodulin (CaM) in the presence of Ca(2+) and CaM-like proteins.

It is found in the nucleus. Its subcellular location is the nucleolus. The protein localises to the cell membrane. In terms of biological role, may be involved in cooperative interactions with calmodulins or calmodulin-like proteins. Recruits calmodulin proteins to microtubules, thus being a potential scaffold in cellular signaling and trafficking. May associate with nucleic acids and regulate gene expression at the transcriptional or post-transcriptional level. The protein is Protein IQ-DOMAIN 20 of Arabidopsis thaliana (Mouse-ear cress).